A 282-amino-acid polypeptide reads, in one-letter code: Pantothenate synthetase (282 aa).

30–37 (MGGLHQGH) is an ATP binding site. The active-site Proton donor is the His37. Gln61 contributes to the (R)-pantoate binding site. Gln61 contributes to the beta-alanine binding site. 146-149 (GQKD) serves as a coordination point for ATP. Gln152 contacts (R)-pantoate. ATP is bound by residues Ile175 and 183 to 186 (MSTR).

It belongs to the pantothenate synthetase family. As to quaternary structure, homodimer.

The protein localises to the cytoplasm. It catalyses the reaction (R)-pantoate + beta-alanine + ATP = (R)-pantothenate + AMP + diphosphate + H(+). The protein operates within cofactor biosynthesis; (R)-pantothenate biosynthesis; (R)-pantothenate from (R)-pantoate and beta-alanine: step 1/1. Its function is as follows. Catalyzes the condensation of pantoate with beta-alanine in an ATP-dependent reaction via a pantoyl-adenylate intermediate. This Vesicomyosocius okutanii subsp. Calyptogena okutanii (strain HA) protein is Pantothenate synthetase.